The primary structure comprises 275 residues: tRNA uridine(34) hydroxylase (275 aa).

The Rhodanese domain maps to 122-218 (SRSDVYTIDT…YFKSTQNKNS (97 aa)). The Cysteine persulfide intermediate role is filled by Cys-178.

The protein belongs to the TrhO family.

The catalysed reaction is uridine(34) in tRNA + AH2 + O2 = 5-hydroxyuridine(34) in tRNA + A + H2O. Its function is as follows. Catalyzes oxygen-dependent 5-hydroxyuridine (ho5U) modification at position 34 in tRNAs. The polypeptide is tRNA uridine(34) hydroxylase (Ehrlichia chaffeensis (strain ATCC CRL-10679 / Arkansas)).